The following is a 481-amino-acid chain: MTIFELSKEGRKAYNLPKNNIKDYGFDFPNHLMRGKEPRLPQVSELDIVRHYTNLAAKNYAVDVGFYPLGSCTMKYNPKINEKLASLEGFTMIHPCQPREVTQGALQLMYELKEMLCEISGMDDMTLIPSAGAHGELTGMLIARAYHLSRGDTKRKKAIVPDSAHGTNPASAMMAGFEVVELKSGKDGRIDLEELEKHLDDEVAVLLLTNPNTLGLFEKDIIKIAETVHKHGALLYYDGANLNAILGRTRPGDMGFDIVHLNLHKTFSTPHGMGGPGSGPVGVKKHLAKFLPIPEIIKESDVYKFNYNKSESIGFIRSFYGNFSVLVRAYVYIKTMGNDGLKKVGQMAVLNANYLRKKVSKIMDIAYPDMCMHEFVATCEKLTKETGVKALDIAKRLLDYGIHAPTMYFPLIVHEDFMIEPTETESKDTLDEFTKILEKIFIEAKENPELVKNAPYTTPVRRLDEASASRKPIVKYNFEEE.

N6-(pyridoxal phosphate)lysine is present on Lys-265.

It belongs to the GcvP family. C-terminal subunit subfamily. In terms of assembly, the glycine cleavage system is composed of four proteins: P, T, L and H. In this organism, the P 'protein' is a heterodimer of two subunits. It depends on pyridoxal 5'-phosphate as a cofactor.

The catalysed reaction is N(6)-[(R)-lipoyl]-L-lysyl-[glycine-cleavage complex H protein] + glycine + H(+) = N(6)-[(R)-S(8)-aminomethyldihydrolipoyl]-L-lysyl-[glycine-cleavage complex H protein] + CO2. Its function is as follows. The glycine cleavage system catalyzes the degradation of glycine. The P protein binds the alpha-amino group of glycine through its pyridoxal phosphate cofactor; CO(2) is released and the remaining methylamine moiety is then transferred to the lipoamide cofactor of the H protein. In Thermosipho melanesiensis (strain DSM 12029 / CIP 104789 / BI429), this protein is Probable glycine dehydrogenase (decarboxylating) subunit 2.